We begin with the raw amino-acid sequence, 367 residues long: Heme A synthase (367 aa).

Transmembrane regions (helical) follow at residues 26–46 (IRGWLAVVLFALFALVLVGGA), 111–131 (LLARGIGVIFALPLFFFWVTG), 139–159 (LPLLAILALGGLQGFIGWWMV), 174–194 (LATHLTIACVIFAACMWIYRG), 212–232 (AAVIAIFSLFQIYLGAIVAGL), 272–292 (FVHRLGAYLLLALVLWHMIAA), 305–325 (SVLLFALVVVQAAIGITTLLL), and 327–347 (VPIGWGVLHQGGALVVLGFAI). H274 serves as a coordination point for heme. H335 is a binding site for heme.

It belongs to the COX15/CtaA family. Type 2 subfamily. As to quaternary structure, interacts with CtaB. Requires heme b as cofactor.

Its subcellular location is the cell membrane. It carries out the reaction Fe(II)-heme o + 2 A + H2O = Fe(II)-heme a + 2 AH2. Its pathway is porphyrin-containing compound metabolism; heme A biosynthesis; heme A from heme O: step 1/1. In terms of biological role, catalyzes the conversion of heme O to heme A by two successive hydroxylations of the methyl group at C8. The first hydroxylation forms heme I, the second hydroxylation results in an unstable dihydroxymethyl group, which spontaneously dehydrates, resulting in the formyl group of heme A. The protein is Heme A synthase of Sinorhizobium medicae (strain WSM419) (Ensifer medicae).